Consider the following 89-residue polypeptide: MSDRKAVIKNADMSEEMQQDAVDCATQALEKYNIEKDIAAYIKKEFDKKYNPTWHCIVGRNFGSYVTHETRHFIYFYLGQVAILLFKSG.

The protein belongs to the dynein light chain family. As to quaternary structure, interacts with spn-F. Forms ternary complexes with spn-F and IKKepsilon. Ubiquitous.

The protein localises to the cytoplasm. Its subcellular location is the cytoskeleton. Its function is as follows. Acts as a non-catalytic accessory component of a dynein complex. This chain is Dynein light chain 1, cytoplasmic (ctp), found in Drosophila melanogaster (Fruit fly).